The following is a 470-amino-acid chain: UTP--glucose-1-phosphate uridylyltransferase 1 (470 aa).

Residue A2 is modified to N-acetylalanine. UTP contacts are provided by residues 86–89 (LNGG), K100, Q163, and G192. Residue 88 to 89 (GG) coordinates substrate. Residues H193 and 221 to 223 (NSD) each bind substrate. UTP-binding residues include D223 and K361.

This sequence belongs to the UDPGP type 1 family. Expressed in roots, rosette leaves, cauline leaves, stems, flowers and siliques.

The protein localises to the cytoplasm. It carries out the reaction alpha-D-glucose 1-phosphate + UTP + H(+) = UDP-alpha-D-glucose + diphosphate. Its function is as follows. Converts glucose 1-phosphate to UDP-glucose, which is the major glycosyl donor for polysaccharides. Acts redundantly with UGP2 and is essential for the synthesis of sucrose, starch and cell wall, and callose deposition. Involved in the regulation of the programmed cell death (PCD) induced by the fungal toxin fumonisin B1 (FB1). This is UTP--glucose-1-phosphate uridylyltransferase 1 from Arabidopsis thaliana (Mouse-ear cress).